A 185-amino-acid chain; its full sequence is Potassium-transporting ATPase KdpC subunit (185 aa).

Residues 14-34 (ALSLLTGVAYPLALTGIAAVI) form a helical membrane-spanning segment.

It belongs to the KdpC family. The system is composed of three essential subunits: KdpA, KdpB and KdpC.

The protein localises to the cell inner membrane. In terms of biological role, part of the high-affinity ATP-driven potassium transport (or Kdp) system, which catalyzes the hydrolysis of ATP coupled with the electrogenic transport of potassium into the cytoplasm. This subunit acts as a catalytic chaperone that increases the ATP-binding affinity of the ATP-hydrolyzing subunit KdpB by the formation of a transient KdpB/KdpC/ATP ternary complex. The protein is Potassium-transporting ATPase KdpC subunit of Cereibacter sphaeroides (strain KD131 / KCTC 12085) (Rhodobacter sphaeroides).